The sequence spans 256 residues: Ribosomal RNA small subunit methyltransferase A (256 aa).

Asparagine 12, leucine 14, glycine 39, glutamate 60, aspartate 85, and asparagine 103 together coordinate S-adenosyl-L-methionine.

It belongs to the class I-like SAM-binding methyltransferase superfamily. rRNA adenine N(6)-methyltransferase family. RsmA subfamily.

The protein resides in the cytoplasm. It catalyses the reaction adenosine(1518)/adenosine(1519) in 16S rRNA + 4 S-adenosyl-L-methionine = N(6)-dimethyladenosine(1518)/N(6)-dimethyladenosine(1519) in 16S rRNA + 4 S-adenosyl-L-homocysteine + 4 H(+). In terms of biological role, specifically dimethylates two adjacent adenosines (A1518 and A1519) in the loop of a conserved hairpin near the 3'-end of 16S rRNA in the 30S particle. May play a critical role in biogenesis of 30S subunits. The polypeptide is Ribosomal RNA small subunit methyltransferase A (Legionella pneumophila (strain Lens)).